The sequence spans 290 residues: Small ribosomal subunit biogenesis GTPase RsgA (290 aa).

Positions 62-219 constitute a CP-type G domain; the sequence is RTCLKRPAVA…VADTPGFSRL (158 aa). Residues 111–114 and 161–169 each bind GTP; these read NKAD and GPSGVGKSS. Residues Cys-243, Cys-248, His-250, and Cys-256 each coordinate Zn(2+).

Belongs to the TRAFAC class YlqF/YawG GTPase family. RsgA subfamily. As to quaternary structure, monomer. Associates with 30S ribosomal subunit, binds 16S rRNA. Zn(2+) serves as cofactor.

The protein resides in the cytoplasm. Its function is as follows. One of several proteins that assist in the late maturation steps of the functional core of the 30S ribosomal subunit. Helps release RbfA from mature subunits. May play a role in the assembly of ribosomal proteins into the subunit. Circularly permuted GTPase that catalyzes slow GTP hydrolysis, GTPase activity is stimulated by the 30S ribosomal subunit. The protein is Small ribosomal subunit biogenesis GTPase RsgA of Moorella thermoacetica (strain ATCC 39073 / JCM 9320).